We begin with the raw amino-acid sequence, 389 residues long: Glutamate 5-kinase (389 aa).

Lys16 is a binding site for ATP. Substrate is bound by residues Ser56, Asp143, and Asn155. Ser175–Asp176 provides a ligand contact to ATP. One can recognise a PUA domain in the interval Ala281–Pro358.

This sequence belongs to the glutamate 5-kinase family.

It is found in the cytoplasm. The catalysed reaction is L-glutamate + ATP = L-glutamyl 5-phosphate + ADP. The protein operates within amino-acid biosynthesis; L-proline biosynthesis; L-glutamate 5-semialdehyde from L-glutamate: step 1/2. Catalyzes the transfer of a phosphate group to glutamate to form L-glutamate 5-phosphate. This is Glutamate 5-kinase from Rhizobium johnstonii (strain DSM 114642 / LMG 32736 / 3841) (Rhizobium leguminosarum bv. viciae).